The sequence spans 121 residues: Large ribosomal subunit protein uL24 (121 aa).

This sequence belongs to the universal ribosomal protein uL24 family. In terms of assembly, part of the 50S ribosomal subunit.

Its function is as follows. One of two assembly initiator proteins, it binds directly to the 5'-end of the 23S rRNA, where it nucleates assembly of the 50S subunit. Functionally, located at the polypeptide exit tunnel on the outside of the subunit. The protein is Large ribosomal subunit protein uL24 of Pyrococcus abyssi (strain GE5 / Orsay).